The following is a 557-amino-acid chain: Formate--tetrahydrofolate ligase (557 aa).

66 to 73 (TPAGEGKS) contacts ATP.

The protein belongs to the formate--tetrahydrofolate ligase family.

It catalyses the reaction (6S)-5,6,7,8-tetrahydrofolate + formate + ATP = (6R)-10-formyltetrahydrofolate + ADP + phosphate. Its pathway is one-carbon metabolism; tetrahydrofolate interconversion. This chain is Formate--tetrahydrofolate ligase, found in Lactobacillus johnsonii (strain CNCM I-12250 / La1 / NCC 533).